The chain runs to 123 residues: Small ribosomal subunit protein uS12 (123 aa).

Asp89 carries the post-translational modification 3-methylthioaspartic acid.

Belongs to the universal ribosomal protein uS12 family. As to quaternary structure, part of the 30S ribosomal subunit. Contacts proteins S8 and S17. May interact with IF1 in the 30S initiation complex.

In terms of biological role, with S4 and S5 plays an important role in translational accuracy. Its function is as follows. Interacts with and stabilizes bases of the 16S rRNA that are involved in tRNA selection in the A site and with the mRNA backbone. Located at the interface of the 30S and 50S subunits, it traverses the body of the 30S subunit contacting proteins on the other side and probably holding the rRNA structure together. The combined cluster of proteins S8, S12 and S17 appears to hold together the shoulder and platform of the 30S subunit. This Trichlorobacter lovleyi (strain ATCC BAA-1151 / DSM 17278 / SZ) (Geobacter lovleyi) protein is Small ribosomal subunit protein uS12.